A 399-amino-acid polypeptide reads, in one-letter code: MRSLSLAWLLGGITLLAASVSCSRTENLAPGRNNSKGRSLIGRLETQPPITGKGVPVEPGFSIDEFSASILTGKLTTVFLPVVYIIVFVIGLPSNGMALWIFLFRTKKKHPAVIYMANLALADLLSVIWFPLKISYHLHGNNWVYGEALCKVLIGFFYGNMYCSILFMTCLSVQRYWVIVNPMGHPRKKANIAVGVSLAIWLLIFLVTIPLYVMKQTIYIPALNITTCHDVLPEEVLVGDMFNYFLSLAIGVFLFPALLTASAYVLMIKTLRSSAMDEHSEKKRQRAIRLIITVLAMYFICFAPSNLLLVVHYFLIKTQRQSHVYALYLVALCLSTLNSCIDPFVYYFVSKDFRDHARNALLCRSVRTVNRMQISLSSNKFSRKSGSYSSSSTSVKTSY.

An N-terminal signal peptide occupies residues Met-1–Thr-25. Residues Glu-26–Arg-38 constitute a propeptide, removed for receptor activation. An N-linked (GlcNAc...) asparagine glycan is attached at Asn-33. Residues Ser-39–Gly-73 lie on the Extracellular side of the membrane. The chain crosses the membrane as a helical span at residues Lys-74–Leu-103. Topologically, residues Phe-104 to His-110 are cytoplasmic. Residues Pro-111–His-139 form a helical membrane-spanning segment. Over Gly-140 to Lys-151 the chain is Extracellular. The cysteines at positions 150 and 228 are disulfide-linked. The helical transmembrane segment at Val-152 to Ile-179 threads the bilayer. Over Val-180–His-185 the chain is Cytoplasmic. A helical transmembrane segment spans residues Pro-186–Val-213. Residues Met-214–Leu-237 lie on the Extracellular side of the membrane. Residue Asn-224 is glycosylated (N-linked (GlcNAc...) asparagine). Residues Val-238–Leu-271 form a helical membrane-spanning segment. Residues Arg-272–His-279 lie on the Cytoplasmic side of the membrane. A helical membrane pass occupies residues Ser-280 to Gln-319. Residues Arg-320–Tyr-325 lie on the Extracellular side of the membrane. A helical transmembrane segment spans residues Ala-326–Val-349. Over Ser-350–Tyr-399 the chain is Cytoplasmic. Cys-363 carries S-palmitoyl cysteine lipidation.

This sequence belongs to the G-protein coupled receptor 1 family. Interacts with TLR4, COPS5 and TMED2. Interacts with GNAQ, GNA11, GNA12, GNA13 and GNA14. A proteolytic cleavage generates a new N-terminus that functions as a tethered ligand. Activating serine proteases include trypsin, mast cell tryptase, coagulation factors VII and Xa, myeloblastin/PRTN3 and membrane-type serine protease 1/ST14. Proposed subsequent cleavage by serine proteases is leading to receptor deactivation and include neutrophil elastase and cathepsin G. At least in part, implicated proteases are also shown to activate the receptor; the glycosylation status of the receptor is thought to contribute to the difference. In terms of processing, N-glycosylated and sialylated. Post-translationally, multiple phosphorylated on serine and threonine residues in the cytoplasmic region upon receptor activation; required for receptor desensitization and recruitment of beta-arrestin. Monoubiquitinated by Cbl at the plasma membrane and in early endosomes; not required for receptor endocytosis but for translocation to late endosomes or lysosomes. Deubiquitination involves Stambp and Usp8; required for lysosomal trafficking and receptor degradation.

Its subcellular location is the cell membrane. Its function is as follows. Receptor for trypsin and trypsin-like enzymes coupled to G proteins. Its function is mediated through the activation of several signaling pathways including phospholipase C (PLC), intracellular calcium, mitogen-activated protein kinase (MAPK), I-kappaB kinase/NF-kappaB and Rho. Can also be transactivated by cleaved F2r/Par1. Involved in modulation of inflammatory responses and regulation of innate and adaptive immunity, and acts as a sensor for proteolytic enzymes generated during infection. Generally is promoting inflammation. Can signal synergistically with Tlr4 and probably Tlr2 in inflammatory responses and modulates Tlr3 signaling. Has a protective role in establishing the endothelial barrier; the activity involves coagulation factor X. Regulates endothelial cell barrier integrity during neutrophil extravasation, probably following proteolytic cleavage by PRTN3. Proposed to have a bronchoprotective role in airway epithelium, but also shown to compromise the airway epithelial barrier by interrupting E-cadherin adhesion. Involved in the regulation of vascular tone; activation results in hypotension presumably mediated by vasodilation. Associates with a subset of G proteins alpha subunits such as GNAQ, GNA11, GNA14, GNA12 and GNA13, but probably not with G(o)-alpha, G(i) subunit alpha-1 and G(i) subunit alpha-2. Believed to be a class B receptor which internalizes as a complex with arrestin and traffic with it to endosomal vesicles, presumably as desensitized receptor, for extended periods of time. Mediates inhibition of TNF-alpha stimulated JNK phosphorylation via coupling to GNAQ and GNA11; the function involves dissociation of Ripk1 and Tradd from Tnfr1. Mediates phosphorylation of nuclear factor NF-kappa-B RELA subunit at 'Ser-536'; the function involves Ikbkb and is predominantly independent of G proteins. Involved in cellular migration. Involved in cytoskeletal rearrangement and chemotaxis through beta-arrestin-promoted scaffolds; the function is independent of GNAQ and GNA11 and involves promotion of cofilin dephosphorylation and actin filament severing. Induces redistribution of Cops5 from the plasma membrane to the cytosol and activation of the JNK cascade is mediated by Cops5. Involved in the recruitment of leukocytes to the sites of inflammation and is the major PAR receptor capable of modulating eosinophil function such as pro-inflammatory cytokine secretion, superoxide production and degranulation. During inflammation promotes dendritic cell maturation, trafficking to the lymph nodes and subsequent T-cell activation. Involved in antimicrobial response of innate immune cells; activation enhances phagocytosis of Gram-positive and killing of Gram-negative bacteria. Acts synergistically with interferon-gamma in enhancing antiviral responses. Mediates activation of pro-inflammatory and pro-fibrotic responses in fibroblasts, triggered by coagulation factor Xa (F10). Probably mediates activation of barrier protective signaling responses in endothelial cells, triggered by coagulation factor Xa (F10). This chain is Proteinase-activated receptor 2 (F2rl1), found in Mus musculus (Mouse).